A 509-amino-acid polypeptide reads, in one-letter code: ATP synthase subunit alpha (509 aa).

An ATP-binding site is contributed by 169 to 176; it reads GDRQTGKT.

Belongs to the ATPase alpha/beta chains family. In terms of assembly, F-type ATPases have 2 components, CF(1) - the catalytic core - and CF(0) - the membrane proton channel. CF(1) has five subunits: alpha(3), beta(3), gamma(1), delta(1), epsilon(1). CF(0) has three main subunits: a(1), b(2) and c(9-12). The alpha and beta chains form an alternating ring which encloses part of the gamma chain. CF(1) is attached to CF(0) by a central stalk formed by the gamma and epsilon chains, while a peripheral stalk is formed by the delta and b chains.

It localises to the cell inner membrane. The catalysed reaction is ATP + H2O + 4 H(+)(in) = ADP + phosphate + 5 H(+)(out). Produces ATP from ADP in the presence of a proton gradient across the membrane. The alpha chain is a regulatory subunit. The chain is ATP synthase subunit alpha from Sinorhizobium fredii (strain NBRC 101917 / NGR234).